The chain runs to 369 residues: Anhydro-N-acetylmuramic acid kinase (369 aa).

An ATP-binding site is contributed by glycine 12–aspartate 19.

Belongs to the anhydro-N-acetylmuramic acid kinase family.

It catalyses the reaction 1,6-anhydro-N-acetyl-beta-muramate + ATP + H2O = N-acetyl-D-muramate 6-phosphate + ADP + H(+). It participates in amino-sugar metabolism; 1,6-anhydro-N-acetylmuramate degradation. It functions in the pathway cell wall biogenesis; peptidoglycan recycling. Functionally, catalyzes the specific phosphorylation of 1,6-anhydro-N-acetylmuramic acid (anhMurNAc) with the simultaneous cleavage of the 1,6-anhydro ring, generating MurNAc-6-P. Is required for the utilization of anhMurNAc either imported from the medium or derived from its own cell wall murein, and thus plays a role in cell wall recycling. The polypeptide is Anhydro-N-acetylmuramic acid kinase (Escherichia coli O45:K1 (strain S88 / ExPEC)).